A 166-amino-acid polypeptide reads, in one-letter code: UPF0134 protein MPN_138 (166 aa).

It belongs to the UPF0134 family.

This is UPF0134 protein MPN_138 from Mycoplasma pneumoniae (strain ATCC 29342 / M129 / Subtype 1) (Mycoplasmoides pneumoniae).